The following is a 228-amino-acid chain: UPF0173 metal-dependent hydrolase ABC2731 (228 aa).

This sequence belongs to the UPF0173 family.

The sequence is that of UPF0173 metal-dependent hydrolase ABC2731 from Shouchella clausii (strain KSM-K16) (Alkalihalobacillus clausii).